An 858-amino-acid chain; its full sequence is Ubiquitin carboxyl-terminal hydrolase 5 (858 aa).

The residue at position 2 (Ala2) is an N-acetylalanine. Residues 74–96 are disordered; that stretch reads RRTRRPKEEDPTTGTGDPPRKKP. Lys113 is covalently cross-linked (Glycyl lysine isopeptide (Lys-Gly) (interchain with G-Cter in SUMO)). Phosphoserine is present on residues Ser149 and Ser156. A UBP-type; degenerate zinc finger spans residues 175-283; the sequence is QVSKHAFSLK…EHLSHFGIDM (109 aa). Cys195 and Cys816 are disulfide-bonded. Zn(2+)-binding residues include Cys199 and Cys202. Trp209 serves as a coordination point for substrate. Cys219 is a Zn(2+) binding site. 221–224 provides a ligand contact to substrate; that stretch reads RRYF. His232 is a Zn(2+) binding site. Residues Tyr259, Tyr261, and Asp264 each coordinate substrate. A Phosphothreonine modification is found at Thr292. In terms of domain architecture, USP spans 326 to 856; that stretch reads TGIRNLGNSC…LGYIYFYQRV (531 aa). Residue Cys335 is the Nucleophile of the active site. Thr623 is subject to Phosphothreonine. UBA domains lie at 654–695 and 722–762; these read MLDE…VMSH and PPPE…IFSH. Phosphoserine occurs at positions 779, 783, and 785. The active-site Proton acceptor is the His818.

Belongs to the peptidase C19 family. In terms of assembly, homodimer. Interacts with TRIML1. Post-translationally, ubiquitinated by SMURF1; leading to proteasomal degradation. SUMOylated at Lys-113; SUMOylation affects the interaction with Cav3.2 channels.

The protein resides in the cytoplasm. Its subcellular location is the stress granule. It localises to the nucleus. The catalysed reaction is Thiol-dependent hydrolysis of ester, thioester, amide, peptide and isopeptide bonds formed by the C-terminal Gly of ubiquitin (a 76-residue protein attached to proteins as an intracellular targeting signal).. Functionally, deubiquitinating enzyme that participates in a wide range of cellular processes by specifically cleaving isopeptide bonds between ubiquitin and substrate proteins or ubiquitin itself. Affects thereby important cellular signaling pathways such as NF-kappa-B, Wnt/beta-catenin, and cytokine production by regulating ubiquitin-dependent protein degradation. Participates in the activation of the Wnt signaling pathway by promoting FOXM1 deubiquitination and stabilization that induces the recruitment of beta-catenin to Wnt target gene promoter. Regulates the assembly and disassembly of heat-induced stress granules by mediating the hydrolysis of unanchored ubiquitin chains. Promotes lipopolysaccharide-induced apoptosis and inflammatory response by stabilizing the TXNIP protein. Affects T-cell biology by stabilizing the inhibitory receptor on T-cells PDC1. Acts as a negative regulator of autophagy by regulating ULK1 at both protein and mRNA levels. Acts also as a negative regulator of type I interferon production by simultaneously removing both 'Lys-48'-linked unanchored and 'Lys-63'-linked anchored polyubiquitin chains on the transcription factor IRF3. Modulates the stability of DNA mismatch repair protein MLH1 and counteracts the effect of the ubiquitin ligase UBR4. Upon activation by insulin, it gets phosphorylated through mTORC1-mediated phosphorylation to enhance YTHDF1 stability by removing 'Lys-11'-linked polyubiquitination. May also deubiquitinate other substrates such as the calcium channel CACNA1H. The sequence is that of Ubiquitin carboxyl-terminal hydrolase 5 (UBP5) from Pongo abelii (Sumatran orangutan).